The following is a 222-amino-acid chain: Probable transcriptional regulator ycf29 (222 aa).

Positions 4–120 (KLMLVENDIV…ELLSIINNLI (117 aa)) constitute a Response regulatory domain. Position 53 is a 4-aspartylphosphate (D53). The HTH luxR-type domain occupies 139–204 (QLNHKIRLTP…LLVKYSINNN (66 aa)). Residues 163 to 182 (NKEISTILNTSVRNVEKYVS) constitute a DNA-binding region (H-T-H motif).

It localises to the plastid. The protein localises to the chloroplast. This Pyropia yezoensis (Susabi-nori) protein is Probable transcriptional regulator ycf29 (ycf29).